Here is a 302-residue protein sequence, read N- to C-terminus: Sulfate adenylyltransferase subunit 2 (302 aa).

A disordered region spans residues 280 to 302 (RQGRAIDHDQSGSMELKKRQGYF).

The protein belongs to the PAPS reductase family. CysD subfamily. As to quaternary structure, heterodimer composed of CysD, the smaller subunit, and CysN.

It carries out the reaction sulfate + ATP + H(+) = adenosine 5'-phosphosulfate + diphosphate. It functions in the pathway sulfur metabolism; hydrogen sulfide biosynthesis; sulfite from sulfate: step 1/3. With CysN forms the ATP sulfurylase (ATPS) that catalyzes the adenylation of sulfate producing adenosine 5'-phosphosulfate (APS) and diphosphate, the first enzymatic step in sulfur assimilation pathway. APS synthesis involves the formation of a high-energy phosphoric-sulfuric acid anhydride bond driven by GTP hydrolysis by CysN coupled to ATP hydrolysis by CysD. This is Sulfate adenylyltransferase subunit 2 from Vibrio parahaemolyticus serotype O3:K6 (strain RIMD 2210633).